Reading from the N-terminus, the 42-residue chain is MTTGKPQSFEKMRTPFPGRSKAKGPQSDIIPSAPPNTPVTEH.

The disordered stretch occupies residues 1-42 (MTTGKPQSFEKMRTPFPGRSKAKGPQSDIIPSAPPNTPVTEH). Over residues 32–42 (SAPPNTPVTEH) the composition is skewed to pro residues.

This is an uncharacterized protein from Schizosaccharomyces pombe (strain 972 / ATCC 24843) (Fission yeast).